A 599-amino-acid polypeptide reads, in one-letter code: Elongation factor 4 (599 aa).

The tr-type G domain occupies 2–184 (KHIRNFSIIA…RLVRDIPAPE (183 aa)). GTP contacts are provided by residues 14 to 19 (DHGKST) and 131 to 134 (NKID).

This sequence belongs to the TRAFAC class translation factor GTPase superfamily. Classic translation factor GTPase family. LepA subfamily.

The protein localises to the cell inner membrane. It carries out the reaction GTP + H2O = GDP + phosphate + H(+). In terms of biological role, required for accurate and efficient protein synthesis under certain stress conditions. May act as a fidelity factor of the translation reaction, by catalyzing a one-codon backward translocation of tRNAs on improperly translocated ribosomes. Back-translocation proceeds from a post-translocation (POST) complex to a pre-translocation (PRE) complex, thus giving elongation factor G a second chance to translocate the tRNAs correctly. Binds to ribosomes in a GTP-dependent manner. The polypeptide is Elongation factor 4 (Yersinia pestis bv. Antiqua (strain Antiqua)).